Reading from the N-terminus, the 61-residue chain is MAKKSMIAKAARAPKFKVRGYTRCQICGRPHSVYKDFGICRVCLRKMANEGLIPGLKKASW.

Positions 24, 27, 40, and 43 each coordinate Zn(2+).

Belongs to the universal ribosomal protein uS14 family. Zinc-binding uS14 subfamily. Part of the 30S ribosomal subunit. Contacts proteins S3 and S10. Zn(2+) is required as a cofactor.

Binds 16S rRNA, required for the assembly of 30S particles and may also be responsible for determining the conformation of the 16S rRNA at the A site. The polypeptide is Small ribosomal subunit protein uS14 (Campylobacter curvus (strain 525.92)).